A 1972-amino-acid chain; its full sequence is TP53-binding protein 1 (1972 aa).

Disordered regions lie at residues 24 to 273 (DSQP…VAAM), 290 to 332 (QIQK…CSLA), and 346 to 507 (GQRS…LGLS). Ser-25 and Ser-63 each carry phosphoserine. A compositionally biased stretch (basic and acidic residues) spans 82-91 (EHLKENKVAD). Polar residues predominate over residues 94–121 (DSSNLDTCGSISQVIEQLPQPNRTSSVL). Phosphoserine is present on residues Ser-105 and Ser-124. Over residues 138-149 (ELEQKEKEKEED) the composition is skewed to basic and acidic residues. A compositionally biased stretch (polar residues) spans 151–168 (SGNTTHSLGAEDTASSQL). 3 positions are modified to phosphoserine: Ser-166, Ser-176, and Ser-178. Polar residues predominate over residues 195–205 (LQSVTTNSGYT). Lys-217 participates in a covalent cross-link: Glycyl lysine isopeptide (Lys-Gly) (interchain with G-Cter in SUMO1); alternate. Lys-217 participates in a covalent cross-link: Glycyl lysine isopeptide (Lys-Gly) (interchain with G-Cter in SUMO2); alternate. Residues Ser-222, Ser-265, and Ser-294 each carry the phosphoserine modification. Composition is skewed to polar residues over residues 300-322 (LSTQEDLFDQSNKTVSSDGCSTP) and 346-361 (GQRSLVQDSLSTNSSD). Thr-302 carries the phosphothreonine modification. 7 positions are modified to phosphoserine: Ser-366, Ser-380, Ser-395, Ser-398, Ser-429, Ser-452, and Ser-464. Residues 426–441 (STVSPQASTPISQSTP) show a composition bias toward polar residues. Residues 442–452 (VFPPGSLPIPS) are compositionally biased toward pro residues. Polar residues predominate over residues 481-490 (HSSSLTVECS). Residues 491 to 501 (KTSEIEPKNSP) are compositionally biased toward basic and acidic residues. Phosphoserine is present on residues Ser-500, Ser-507, Ser-518, Ser-523, and Ser-525. Residues 520–531 (SEYSQSPKMESL) show a composition bias toward polar residues. The tract at residues 520-556 (SEYSQSPKMESLSSHRIDEDGENTQIEDTEPMSPVLN) is disordered. The segment covering 538–549 (EDGENTQIEDTE) has biased composition (acidic residues). A phosphothreonine mark is found at Thr-543 and Thr-548. Phosphoserine occurs at positions 552, 566, and 580. A disordered region spans residues 568 to 595 (LMNPAQDGEVQLSQNDDKTKGDDTDTRD). Residues 582 to 595 (NDDKTKGDDTDTRD) show a composition bias toward basic and acidic residues. Phosphoserine is present on residues Ser-630, Ser-635, Ser-639, and Ser-640. Positions 649–687 (EIKEHHPEEGSSGSEVEEIPETPCESQGEELKEENMESV) are disordered. A Phosphothreonine modification is found at Thr-670. 8 positions are modified to phosphoserine: Ser-692, Ser-724, Ser-727, Ser-771, Ser-809, Ser-830, Ser-831, and Ser-834. Residues 742-911 (EQEAWEEATS…TPFHFTLPKE (170 aa)) are disordered. The span at 798–816 (AENRLDTKEEKSVEYEGDL) shows a compositional bias: basic and acidic residues. A compositionally biased stretch (basic and acidic residues) spans 839-848 (RADDPLRLDQ). Residues 849 to 864 (ELQQPQTQEKTSNSLT) show a composition bias toward polar residues. Residue Thr-855 is modified to Phosphothreonine. Residue Lys-868 forms a Glycyl lysine isopeptide (Lys-Gly) (interchain with G-Cter in SUMO1); alternate linkage. Residue Lys-868 forms a Glycyl lysine isopeptide (Lys-Gly) (interchain with G-Cter in SUMO2); alternate linkage. A compositionally biased stretch (polar residues) spans 890–902 (HASQSFCESSSET). The residue at position 922 (Thr-922) is a Phosphothreonine. A Glycyl lysine isopeptide (Lys-Gly) (interchain with G-Cter in SUMO2) cross-link involves residue Lys-930. 2 positions are modified to phosphoserine: Ser-970 and Ser-975. A Glycyl lysine isopeptide (Lys-Gly) (interchain with G-Cter in SUMO2) cross-link involves residue Lys-984. Disordered stretches follow at residues 997 to 1028 (EASEESLQFNLEKPATGERKNGSTAVAESVAS) and 1045 to 1103 (ENEA…VSPA). The segment covering 1018–1028 (GSTAVAESVAS) has biased composition (polar residues). Residue Ser-1028 is modified to Phosphoserine. Thr-1056 carries the post-translational modification Phosphothreonine. Ser-1068 is subject to Phosphoserine. Over residues 1071 to 1083 (EEEKEKLEGDHTI) the composition is skewed to basic and acidic residues. Phosphoserine occurs at positions 1086, 1094, 1101, and 1114. The span at 1127-1139 (DQKEGRSTNKENP) shows a compositional bias: basic and acidic residues. Disordered stretches follow at residues 1127-1148 (DQKEGRSTNKENPSKALIERPS), 1188-1232 (NFGK…QPPH), and 1269-1478 (VTEE…DGLD). Ser-1148 carries the post-translational modification Phosphoserine. Residues 1188-1200 (NFGKQDATVQTER) are compositionally biased toward polar residues. Phosphothreonine is present on Thr-1214. A phosphoserine mark is found at Ser-1216 and Ser-1219. The segment covering 1272–1285 (ETEEPIVECQECET) has biased composition (acidic residues). 2 stretches are compositionally biased toward low complexity: residues 1298–1307 (DLGDISSFSS) and 1316–1329 (SSGTSLSAMHSSGS). 2 positions are modified to phosphoserine: Ser-1317 and Ser-1342. Arg-1355 is subject to Omega-N-methylarginine. Ser-1362 carries the phosphoserine modification. Lys-1365 is covalently cross-linked (Glycyl lysine isopeptide (Lys-Gly) (interchain with G-Cter in SUMO2)). Ser-1368 is subject to Phosphoserine. Phosphothreonine is present on Thr-1372. The GAR signature appears at 1396–1403 (RGRGRRGR). Phosphoserine occurs at positions 1426 and 1430. Residue Lys-1434 forms a Glycyl lysine isopeptide (Lys-Gly) (interchain with G-Cter in SUMO1); alternate linkage. Lys-1434 participates in a covalent cross-link: Glycyl lysine isopeptide (Lys-Gly) (interchain with G-Cter in SUMO2); alternate. Ser-1460, Ser-1462, and Ser-1474 each carry phosphoserine. Residues 1484–1603 (NSFVGLRVVA…NRLREQYGLG (120 aa)) are tudor-like. The interaction with dimethylated histone H4 stretch occupies residues 1495-1523 (WSSNGYFYSGKITRDVGAGKYKLLFDDGY). A Glycyl lysine isopeptide (Lys-Gly) (interchain with G-Cter in SUMO1); alternate cross-link involves residue Lys-1563. Residue Lys-1563 forms a Glycyl lysine isopeptide (Lys-Gly) (interchain with G-Cter in SUMO2); alternate linkage. The short motif at 1604 to 1631 (PYEAVTPLTKAADISLDNLVEGKRKRRS) is the UDR element. Thr-1609 carries the phosphothreonine modification. Residues Ser-1618, Ser-1631, and Ser-1635 each carry the phosphoserine modification. 2 disordered regions span residues 1622 to 1719 (LVEG…EEQR) and 1745 to 1768 (LASRSKLPDGPTGSSEEEEEFLEI). Residues 1634–1650 (SSPATPTASSSSSTTPT) show a composition bias toward low complexity. A phosphothreonine mark is found at Thr-1638 and Thr-1648. Residues Ser-1656, Ser-1673, and Ser-1678 each carry the phosphoserine modification. Residue Lys-1685 forms a Glycyl lysine isopeptide (Lys-Gly) (interchain with G-Cter in ubiquitin) linkage. Phosphoserine is present on residues Ser-1701, Ser-1759, and Ser-1778. BRCT domains lie at 1724–1848 (LNKT…NYLL) and 1864–1964 (PREN…QHPK).

Homoligomer. Interacts with p53/TP53 (via the central domain). Interacts with DCLRE1C. Interacts with histone H2AX and this requires phosphorylation of H2AX on 'Ser-139'. Interacts with histone H4 that has been dimethylated at 'Lys-20' (H4K20me2). Has low affinity for histone H4 containing monomethylated 'Lys-20' (H4K20me1). Does not bind histone H4 containing unmethylated or trimethylated 'Lys-20' (H4K20me3). Has low affinity for histone H3 that has been dimethylated on 'Lys-79'. Has very low affinity for histone H3 that has been monomethylated on 'Lys-79' (in vitro). Does not bind unmethylated histone H3. Interacts with histone H2A monoubiquitinated at 'Lys-15' (H2AK15Ub). Interacts with PWWP3A/EXPAND1. Interacts with CHEK2; modulates CHEK2 phosphorylation at 'Thr-68' in response to infrared. Interacts with MSL1; this interaction may be required for MSL1 DNA repair activity, but not for histone acetyltransferase activity. Interacts (when phosphorylated by ATM) with RIF1. Interacts (via the Tudor-like domain) with NUDT16L1/TIRR; interaction masks the Tudor-like domain and prevents recruitment to chromatin. Interacts with PAXIP1. Interacts with SHLD2. Interacts (when phosphorylated) with TOPBP1. Interacts with GFI1; promoting methylation by PRMT1. Interacts with (phosphorylated) DYNLL1; specifically binds DYNLL1 phosphorylated at 'Ser-88' and promotes its recruitment to double stand breaks (DSBs). In terms of assembly, (Microbial infection) Interacts (via C-terminus) with Epstein-Barr virus lytic switch protein BZLF1 (via C-terminus); this interaction is involved in the activation of the viral lytic cycle. Post-translationally, asymmetrically dimethylated on Arg residues by PRMT1. Methylation is required for DNA binding. In terms of processing, phosphorylated at basal level in the absence of DNA damage. Phosphorylated by ATM in response to DNA damage: phosphorylation at different sites promotes interaction with different set of proteins: phosphorylation at the N-terminus by ATM (residues from 6-178) promotes interaction with PAXIP1 and non-homologous end joining (NHEJ) of dysfunctional telomeres. Phosphorylation by ATM at residues that are located more C-terminus (residues 300-650) leads to promote interaction with RIF1. Interaction with RIF1 leads to disrupt interaction with NUDT16L1/TIRR. Phosphorylation at Thr-1609 and Ser-1618 in the UDR motif blocks interaction with H2AK15ub. Dephosphorylated by PPP4C. Hyperphosphorylation during mitosis correlates with its exclusion from chromatin and DNA lesions. Hyperphosphorylated in an ATR-dependent manner in response to DNA damage induced by UV irradiation. Dephosphorylated by PPP5C. Phosphorylation at Ser-366 and Thr-670 promotes interaction with TOPBP1. Phosphorylated by VRK1. Monoubiquitinated at Lys-1685 by MSL2 is reponse to DNA damage, leading to its stabilization.

It localises to the nucleus. Its subcellular location is the chromosome. The protein resides in the centromere. It is found in the kinetochore. Functionally, double-strand break (DSB) repair protein involved in response to DNA damage, telomere dynamics and class-switch recombination (CSR) during antibody genesis. Plays a key role in the repair of double-strand DNA breaks (DSBs) in response to DNA damage by promoting non-homologous end joining (NHEJ)-mediated repair of DSBs and specifically counteracting the function of the homologous recombination (HR) repair protein BRCA1. In response to DSBs, phosphorylation by ATM promotes interaction with RIF1 and dissociation from NUDT16L1/TIRR, leading to recruitment to DSBs sites. Recruited to DSBs sites by recognizing and binding histone H2A monoubiquitinated at 'Lys-15' (H2AK15Ub) and histone H4 dimethylated at 'Lys-20' (H4K20me2), two histone marks that are present at DSBs sites. Required for immunoglobulin class-switch recombination (CSR) during antibody genesis, a process that involves the generation of DNA DSBs. Participates in the repair and the orientation of the broken DNA ends during CSR. In contrast, it is not required for classic NHEJ and V(D)J recombination. Promotes NHEJ of dysfunctional telomeres via interaction with PAXIP1. In Homo sapiens (Human), this protein is TP53-binding protein 1.